Here is a 440-residue protein sequence, read N- to C-terminus: GTPase Der (440 aa).

EngA-type G domains are found at residues 3–167 (PIIA…PYDR) and 176–351 (TRIA…EQYC). GTP-binding positions include 9–16 (GRPNVGKS), 56–60 (DTGGF), 119–122 (NKVD), 182–189 (GRPNVGKS), 229–233 (DTAGI), and 294–297 (NKWD). Positions 352–436 (KRVTTGELNR…PLKLIFRGRD (85 aa)) constitute a KH-like domain.

The protein belongs to the TRAFAC class TrmE-Era-EngA-EngB-Septin-like GTPase superfamily. EngA (Der) GTPase family. As to quaternary structure, associates with the 50S ribosomal subunit.

Functionally, GTPase that plays an essential role in the late steps of ribosome biogenesis. In Geobacter sp. (strain M21), this protein is GTPase Der.